A 370-amino-acid polypeptide reads, in one-letter code: Coiled-coil domain-containing protein 89 (370 aa).

A disordered region spans residues 1–21; that stretch reads MPQEEKTLRMDTPPPDEILGK. Residue T12 is modified to Phosphothreonine. Positions 36-346 form a coiled coil; sequence KEMDGLREAL…YDELRLQSEA (311 aa).

This sequence belongs to the CCDC89 family. As to quaternary structure, interacts with HEY1. Expression is restricted to the adult testis, where localization is almost exclusive to round spermatids.

Its subcellular location is the cytoplasm. The protein localises to the nucleus. This is Coiled-coil domain-containing protein 89 from Mus musculus (Mouse).